A 333-amino-acid polypeptide reads, in one-letter code: Holliday junction branch migration complex subunit RuvB (333 aa).

The segment at 1–181 (MNDILNKEPM…FGISSHMEYY (181 aa)) is large ATPase domain (RuvB-L). ATP is bound by residues L20, R21, G62, K65, T66, T67, 128 to 130 (EDF), R171, Y181, and R218. T66 provides a ligand contact to Mg(2+). A small ATPAse domain (RuvB-S) region spans residues 182–252 (QERDLEEIVK…ITDKALTILD (71 aa)). A head domain (RuvB-H) region spans residues 255–333 (AAGLDYIDQK…HLGYVYNEEE (79 aa)). 3 residues coordinate DNA: R291, R310, and R315.

The protein belongs to the RuvB family. Homohexamer. Forms an RuvA(8)-RuvB(12)-Holliday junction (HJ) complex. HJ DNA is sandwiched between 2 RuvA tetramers; dsDNA enters through RuvA and exits via RuvB. An RuvB hexamer assembles on each DNA strand where it exits the tetramer. Each RuvB hexamer is contacted by two RuvA subunits (via domain III) on 2 adjacent RuvB subunits; this complex drives branch migration. In the full resolvosome a probable DNA-RuvA(4)-RuvB(12)-RuvC(2) complex forms which resolves the HJ.

It is found in the cytoplasm. The catalysed reaction is ATP + H2O = ADP + phosphate + H(+). Functionally, the RuvA-RuvB-RuvC complex processes Holliday junction (HJ) DNA during genetic recombination and DNA repair, while the RuvA-RuvB complex plays an important role in the rescue of blocked DNA replication forks via replication fork reversal (RFR). RuvA specifically binds to HJ cruciform DNA, conferring on it an open structure. The RuvB hexamer acts as an ATP-dependent pump, pulling dsDNA into and through the RuvAB complex. RuvB forms 2 homohexamers on either side of HJ DNA bound by 1 or 2 RuvA tetramers; 4 subunits per hexamer contact DNA at a time. Coordinated motions by a converter formed by DNA-disengaged RuvB subunits stimulates ATP hydrolysis and nucleotide exchange. Immobilization of the converter enables RuvB to convert the ATP-contained energy into a lever motion, pulling 2 nucleotides of DNA out of the RuvA tetramer per ATP hydrolyzed, thus driving DNA branch migration. The RuvB motors rotate together with the DNA substrate, which together with the progressing nucleotide cycle form the mechanistic basis for DNA recombination by continuous HJ branch migration. Branch migration allows RuvC to scan DNA until it finds its consensus sequence, where it cleaves and resolves cruciform DNA. This chain is Holliday junction branch migration complex subunit RuvB, found in Lactococcus lactis subsp. cremoris (strain SK11).